Consider the following 239-residue polypeptide: Transcriptional regulatory protein BtsR (239 aa).

The region spanning 3 to 116 (KVLIVDDEPL…RLEKTLHRLR (114 aa)) is the Response regulatory domain. 4-aspartylphosphate is present on Asp54. Residues 137 to 239 (IPCTGHSRIY…LKSLKEAIGL (103 aa)) form the HTH LytTR-type domain.

Phosphorylated by BtsS.

Functionally, member of the two-component regulatory system BtsS/BtsR. BtsR regulates expression of btsT by binding to its promoter region. The protein is Transcriptional regulatory protein BtsR of Salmonella typhi.